A 213-amino-acid chain; its full sequence is Adenylate kinase (213 aa).

10 to 15 (GCGKGT) is an ATP binding site. The NMP stretch occupies residues 30-59 (STGDLMRKEISLNTTLGLKCQEYMNAGKYV). AMP contacts are provided by residues Thr-31, Arg-36, 57-59 (KYV), 83-86 (GYPR), and Gln-90. An LID region spans residues 124–161 (NRLVCPLCKASFNLETRKPKQEGLCDFDNTKLVKRSDD). Arg-125 serves as a coordination point for ATP. Residues Cys-128 and Cys-131 each coordinate Zn(2+). 134-135 (SF) serves as a coordination point for ATP. Positions 148 and 151 each coordinate Zn(2+). Residues Arg-158 and Arg-169 each coordinate AMP. Asn-197 contributes to the ATP binding site.

Belongs to the adenylate kinase family. As to quaternary structure, monomer.

It localises to the cytoplasm. It catalyses the reaction AMP + ATP = 2 ADP. Its pathway is purine metabolism; AMP biosynthesis via salvage pathway; AMP from ADP: step 1/1. Its function is as follows. Catalyzes the reversible transfer of the terminal phosphate group between ATP and AMP. Plays an important role in cellular energy homeostasis and in adenine nucleotide metabolism. This Mycoplasma capricolum subsp. capricolum (strain California kid / ATCC 27343 / NCTC 10154) protein is Adenylate kinase.